We begin with the raw amino-acid sequence, 215 residues long: Vesicle-trafficking protein SEC22b-A (215 aa).

Residues 1–190 (MVLQTMIVRV…RSDAKYLNTR (190 aa)) are Cytoplasmic-facing. Positions 6 to 119 (MIVRVADSLP…YSFIEFDTYI (114 aa)) constitute a Longin domain. The v-SNARE coiled-coil homology domain occupies 134–194 (NLGNINSELH…KYLNTRSTYA (61 aa)). The chain crosses the membrane as a helical span at residues 191–213 (STYAKVAAGAVIIITLIIYVRFW). Residues 214 to 215 (WL) lie on the Lumenal side of the membrane.

This sequence belongs to the synaptobrevin family. As to quaternary structure, component of 2 distinct SNARE complexes.

The protein resides in the endoplasmic reticulum membrane. It localises to the endoplasmic reticulum-Golgi intermediate compartment membrane. The protein localises to the golgi apparatus. Its subcellular location is the cis-Golgi network membrane. It is found in the trans-Golgi network membrane. The protein resides in the melanosome. In terms of biological role, SNARE involved in targeting and fusion of ER-derived transport vesicles with the Golgi complex as well as Golgi-derived retrograde transport vesicles with the ER. This Danio rerio (Zebrafish) protein is Vesicle-trafficking protein SEC22b-A.